Reading from the N-terminus, the 702-residue chain is Autophagy-related protein 9 (702 aa).

Topologically, residues 1–205 (MFYQPAQNKK…GKGLSCIIVH (205 aa)) are cytoplasmic. Residues 35-128 (QESLDSDEDE…SKQKPALPNF (94 aa)) form a disordered region. Residues 38–47 (LDSDEDESSP) show a composition bias toward acidic residues. Positions 94–107 (SSKVPSKHPSPSFP) are enriched in low complexity. Residues 108-120 (ETTSLRNLQNGSK) show a composition bias toward polar residues. Residues 206–223 (RLFQILTVSFVIGFTTFI) traverse the membrane as a helical segment. Over 224 to 251 (TSCIDWPAVTPHGSLAGVTKSQCIAQMS) the chain is Lumenal. A helical transmembrane segment spans residues 252–270 (PITYLVLWLFLSFLLALWI). Topologically, residues 271 to 421 (YYLTDIPRLW…RRRFIVAGFL (151 aa)) are cytoplasmic. Residues 422 to 446 (NCLFAPIVAIYLVIHNFFRYFNEYH) lie within the membrane without spanning it. At 447 to 496 (KNPGALSTRRYTPLALWTFREYNELQHFFDERINDSYAAASHYVSQFPDF) the chain is on the cytoplasmic side. The helical transmembrane segment at 497-522 (NMIRLFKYISFILGSFTAILVIITVF) threads the bilayer. Over 523-537 (DPELMVTFEITKDRS) the chain is Lumenal. A helical membrane pass occupies residues 538–555 (VLFYLGLFGSLIAVSRSI). At 556 to 603 (IPDETLVFAPEKALRRVITFTHYMPGWWSDNMHSKAVQQEFCSLYSYR) the chain is on the cytoplasmic side. Residues 604-624 (IVNLLWEILGILLTPVLLFFT) lie within the membrane without spanning it. Residues 625–702 (FPSCSQDIVD…NTEAPRRDLR (78 aa)) are Cytoplasmic-facing.

This sequence belongs to the ATG9 family. In terms of assembly, homotrimer; forms a homotrimer with a central pore that forms a path between the two membrane leaflets. Interacts with ctl1. Phosphorylated by atg1. Atg1 phosphorylation is required for preautophagosome elongation.

It localises to the preautophagosomal structure membrane. The protein localises to the cytoplasmic vesicle membrane. It is found in the golgi apparatus membrane. The protein resides in the endoplasmic reticulum membrane. It carries out the reaction a 1,2-diacyl-sn-glycero-3-phosphocholine(in) = a 1,2-diacyl-sn-glycero-3-phosphocholine(out). The enzyme catalyses a 1,2-diacyl-sn-glycero-3-phospho-L-serine(in) = a 1,2-diacyl-sn-glycero-3-phospho-L-serine(out). The catalysed reaction is a 1,2-diacyl-sn-glycero-3-phosphoethanolamine(in) = a 1,2-diacyl-sn-glycero-3-phosphoethanolamine(out). It catalyses the reaction a 1,2-diacyl-sn-glycero-3-phospho-(1D-myo-inositol-3-phosphate)(in) = a 1,2-diacyl-sn-glycero-3-phospho-(1D-myo-inositol-3-phosphate)(out). In terms of biological role, phospholipid scramblase involved in autophagy and cytoplasm to vacuole transport (Cvt) vesicle formation. Cycles between the preautophagosomal structure/phagophore assembly site (PAS) and the cytoplasmic vesicle pool and supplies membrane for the growing autophagosome. Lipid scramblase activity plays a key role in preautophagosomal structure/phagophore assembly by distributing the phospholipids that arrive through atg2 from the cytoplasmic to the luminal leaflet of the bilayer, thereby driving autophagosomal membrane expansion. Also involved in endoplasmic reticulum-specific autophagic process and is essential for the survival of cells subjected to severe ER stress. Different machineries are required for anterograde trafficking to the PAS during either the Cvt pathway or bulk autophagy and for retrograde trafficking. Has a role in meiosis and sporulation. This chain is Autophagy-related protein 9, found in Schizosaccharomyces pombe (strain 972 / ATCC 24843) (Fission yeast).